The sequence spans 376 residues: Methylthioribose-1-phosphate isomerase (376 aa).

The active-site Proton donor is aspartate 256.

Belongs to the eIF-2B alpha/beta/delta subunits family. MtnA subfamily.

It localises to the cytoplasm. It is found in the nucleus. The enzyme catalyses 5-(methylsulfanyl)-alpha-D-ribose 1-phosphate = 5-(methylsulfanyl)-D-ribulose 1-phosphate. It functions in the pathway amino-acid biosynthesis; L-methionine biosynthesis via salvage pathway; L-methionine from S-methyl-5-thio-alpha-D-ribose 1-phosphate: step 1/6. Functionally, catalyzes the interconversion of methylthioribose-1-phosphate (MTR-1-P) into methylthioribulose-1-phosphate (MTRu-1-P). This Vitis vinifera (Grape) protein is Methylthioribose-1-phosphate isomerase.